The primary structure comprises 568 residues: Putative DEAD-box RNA helicase HEL64 (568 aa).

The interval 1–34 (MEETYSPFTGRQGQYNQGYNGGGRRDSRGGMGER) is disordered. Residues 23-34 (GRRDSRGGMGER) are compositionally biased toward basic and acidic residues. Positions 102–130 (FDHLCGIVPPYLLKKLTAQNFTAPTPVQA) match the Q motif motif. Residues 133 to 307 (WPVLLSGRDL…AEFQKQWIRI (175 aa)) form the Helicase ATP-binding domain. 146 to 153 (AKTGSGKT) lines the ATP pocket. The DEAD box signature appears at 255–258 (DEAD). The region spanning 335–483 (ELRKLMQEHR…EIPDWMIEWN (149 aa)) is the Helicase C-terminal domain.

It belongs to the DEAD box helicase family. DDX5/DBP2 subfamily.

The protein resides in the nucleus. The catalysed reaction is ATP + H2O = ADP + phosphate + H(+). In Trypanosoma brucei brucei, this protein is Putative DEAD-box RNA helicase HEL64 (HEL64).